The chain runs to 284 residues: Type II methyltransferase M1.LlaDCHI (284 aa).

S-adenosyl-L-methionine is bound by residues W17, K21, D62, and D194.

It belongs to the N(4)/N(6)-methyltransferase family.

It carries out the reaction a 2'-deoxyadenosine in DNA + S-adenosyl-L-methionine = an N(6)-methyl-2'-deoxyadenosine in DNA + S-adenosyl-L-homocysteine + H(+). In terms of biological role, an alpha subtype methylase, recognizes the double-stranded sequence 5'-GATC-3', methylates A-2 on both strands, and protects the DNA from cleavage by the LlaDCHI endonuclease. The protein is Type II methyltransferase M1.LlaDCHI of Lactococcus lactis subsp. cremoris (Streptococcus cremoris).